Reading from the N-terminus, the 234-residue chain is Protein CIST1 (234 aa).

An N-terminal signal peptide occupies residues 1 to 24 (MACPQLPPLLLLVLVVLLKAGVNY). The Extracellular segment spans residues 25-180 (NTPFTDIVTS…GPRELHRNPS (156 aa)). Positions 41–121 (SPVSSLISSP…THPSSGSPSA (81 aa)) are enriched in polar residues. Residues 41-174 (SPVSSLISSP…PAPGDTGPRE (134 aa)) are disordered. A compositionally biased stretch (low complexity) spans 122–140 (ELTPSSHSTLPSSESLTPH). A compositionally biased stretch (polar residues) spans 141–159 (WSPTSHSPGTEPLTSTDQT). A helical membrane pass occupies residues 181–201 (VVVVVCLLVSLLLIGSVVMAV). Residues 202–234 (RFCHRNESKFENLDEVSMGSVNDRLSFAHHLQE) are Cytoplasmic-facing.

Its subcellular location is the membrane. The polypeptide is Protein CIST1 (Homo sapiens (Human)).